Here is a 63-residue protein sequence, read N- to C-terminus: uncharacterized protein (63 aa).

This is an uncharacterized protein from Archaeoglobus fulgidus (strain ATCC 49558 / DSM 4304 / JCM 9628 / NBRC 100126 / VC-16).